The sequence spans 100 residues: NAD(P)H-quinone oxidoreductase subunit 4L, chloroplastic (100 aa).

The next 3 helical transmembrane spans lie at 1–21 (MIENALILGAYLFCIGFYGLI), 29–49 (ALMCLELIFNAVNINFVTFSN), and 63–83 (ISVIAIAAAEAAIGLSIILII).

This sequence belongs to the complex I subunit 4L family. As to quaternary structure, NDH is composed of at least 16 different subunits, 5 of which are encoded in the nucleus.

Its subcellular location is the plastid. It is found in the chloroplast thylakoid membrane. It carries out the reaction a plastoquinone + NADH + (n+1) H(+)(in) = a plastoquinol + NAD(+) + n H(+)(out). The catalysed reaction is a plastoquinone + NADPH + (n+1) H(+)(in) = a plastoquinol + NADP(+) + n H(+)(out). In terms of biological role, NDH shuttles electrons from NAD(P)H:plastoquinone, via FMN and iron-sulfur (Fe-S) centers, to quinones in the photosynthetic chain and possibly in a chloroplast respiratory chain. The immediate electron acceptor for the enzyme in this species is believed to be plastoquinone. Couples the redox reaction to proton translocation, and thus conserves the redox energy in a proton gradient. The sequence is that of NAD(P)H-quinone oxidoreductase subunit 4L, chloroplastic from Angiopteris evecta (Mule's foot fern).